The sequence spans 218 residues: MGQKINPLGFRLGTTQGHHSLWFAQPKSYSEGLQEDQKIRDCIKNYVQKNMRISSGAEGIARIEIQKRIDLIQVIIYMGFPKLLIEGRPRGVEELQINVQKEFNSVNRKLNIAITRIAKPYGQPNILAEFIAGQLKNRVSFRKAMKKAIELTEQADTKGIQIQIAGRIDGKEIARVEWIREGRVPLQTIRAKIYYCSYTVRTIYGVLGIKIWIFVDEE.

Residues 43 to 118 (IKNYVQKNMR…KLNIAITRIA (76 aa)) form the KH type-2 domain.

It belongs to the universal ribosomal protein uS3 family. As to quaternary structure, part of the 30S ribosomal subunit.

Its subcellular location is the plastid. The protein localises to the chloroplast. The polypeptide is Small ribosomal subunit protein uS3c (rps3) (Buxus microphylla (Littleleaf boxwood)).